Here is a 159-residue protein sequence, read N- to C-terminus: Succinate dehydrogenase [ubiquinone] cytochrome b small subunit, mitochondrial (159 aa).

A mitochondrion-targeting transit peptide spans 1 to 30 (MLQTRLGLGALRQGRLLFAVKSFSTTSVAK). Topologically, residues 31 to 65 (IFPPPPQTIKGTVNDAAVFPHHSKLHGSYHWDFER) are mitochondrial matrix. The helical transmembrane segment at 66-82 (IIAIAMVPQVMIPLFTG) threads the bilayer. Residues 83-89 (TSHPLMD) are Mitochondrial intermembrane-facing. A helical membrane pass occupies residues 90–109 (AALACTLITHAHLGFESCVI). H99 contributes to the heme binding site. Residues 110-122 (DYFPARRFKKLSP) are Mitochondrial matrix-facing. Y111 serves as a coordination point for a ubiquinone. Residues 123-140 (LMHWILRGCTVLTLIGVY) form a helical membrane-spanning segment. The Mitochondrial intermembrane segment spans residues 141 to 159 (EFNTNDIGLTEGIKKLWKS).

This sequence belongs to the CybS family. In terms of assembly, forms part of complex II containing four subunits: a flavoprotein (FP), an iron-sulfur protein (IP) and a cytochrome b composed of a large and a small subunit.

Its subcellular location is the mitochondrion inner membrane. The protein operates within carbohydrate metabolism; tricarboxylic acid cycle. Membrane-anchoring subunit of succinate dehydrogenase (SDH) that is involved in complex II of the mitochondrial electron transport chain and is responsible for transferring electrons from succinate to ubiquinone (coenzyme Q). The chain is Succinate dehydrogenase [ubiquinone] cytochrome b small subunit, mitochondrial (sdh4) from Schizosaccharomyces pombe (strain 972 / ATCC 24843) (Fission yeast).